The primary structure comprises 153 residues: Small ribosomal subunit protein eS19 (153 aa).

Disordered regions lie at residues 77–99 (YGTS…KGSG) and 113–139 (GYVE…TAGD). Positions 120–133 (NDGRRVTGDGRSLL) are enriched in basic and acidic residues.

It belongs to the eukaryotic ribosomal protein eS19 family. As to quaternary structure, part of the 30S ribosomal subunit.

May be involved in maturation of the 30S ribosomal subunit. This Haloarcula marismortui (strain ATCC 43049 / DSM 3752 / JCM 8966 / VKM B-1809) (Halobacterium marismortui) protein is Small ribosomal subunit protein eS19.